The following is a 231-amino-acid chain: 7-cyano-7-deazaguanine synthase (231 aa).

8 to 18 (FSGGQDSTTCL) contributes to the ATP binding site. Cysteine 188, cysteine 197, cysteine 200, and cysteine 203 together coordinate Zn(2+).

Belongs to the QueC family. Zn(2+) serves as cofactor.

It catalyses the reaction 7-carboxy-7-deazaguanine + NH4(+) + ATP = 7-cyano-7-deazaguanine + ADP + phosphate + H2O + H(+). It functions in the pathway purine metabolism; 7-cyano-7-deazaguanine biosynthesis. Catalyzes the ATP-dependent conversion of 7-carboxy-7-deazaguanine (CDG) to 7-cyano-7-deazaguanine (preQ(0)). The protein is 7-cyano-7-deazaguanine synthase of Salmonella choleraesuis (strain SC-B67).